A 100-amino-acid chain; its full sequence is NADH-quinone oxidoreductase subunit K 1 (100 aa).

3 consecutive transmembrane segments (helical) span residues 3-23 (IIKA…LGVI), 28-48 (LITV…ALVA), and 60-80 (IFAF…LGLI).

The protein belongs to the complex I subunit 4L family. In terms of assembly, NDH-1 is composed of 14 different subunits. Subunits NuoA, H, J, K, L, M, N constitute the membrane sector of the complex.

The protein resides in the cell inner membrane. It carries out the reaction a quinone + NADH + 5 H(+)(in) = a quinol + NAD(+) + 4 H(+)(out). In terms of biological role, NDH-1 shuttles electrons from NADH, via FMN and iron-sulfur (Fe-S) centers, to quinones in the respiratory chain. The immediate electron acceptor for the enzyme in this species is believed to be ubiquinone. Couples the redox reaction to proton translocation (for every two electrons transferred, four hydrogen ions are translocated across the cytoplasmic membrane), and thus conserves the redox energy in a proton gradient. The chain is NADH-quinone oxidoreductase subunit K 1 from Aquifex aeolicus (strain VF5).